The sequence spans 314 residues: MPIKLDNKLPALDVLRSKNVFIMDENRASSQDIRPMEVLILNLMPTKEVTETQLLRLLANTPLQINVEFLYMASHKSKNTHAEHMETFYKTFDEIKDKYYDGLIVTGAPVEQMPFEEVDYWQELTRVFDWSKNHVYSTLHLCWGAQAGLYYKHEVDKVPLSEKLSGIYKQTVDMPENFLMNGFDDSFVSPHSRYTEVTLEDIKNKTDLDVVASGQEVGLSILASKDLREVYSFGHFEYDRDTLAREYRRDLEVGINPDVPANYFPGDDPSQEPKLRWNLAASTFFSNWINYAVYQETPYRLEELEDDFSFYGYL.

Cysteine 142 serves as the catalytic Acyl-thioester intermediate. Substrate contacts are provided by lysine 163 and serine 192. The Proton acceptor role is filled by histidine 235. The active site involves glutamate 237. Arginine 249 contacts substrate.

This sequence belongs to the MetA family.

The protein localises to the cytoplasm. It carries out the reaction L-homoserine + acetyl-CoA = O-acetyl-L-homoserine + CoA. It participates in amino-acid biosynthesis; L-methionine biosynthesis via de novo pathway; O-acetyl-L-homoserine from L-homoserine: step 1/1. Its function is as follows. Transfers an acetyl group from acetyl-CoA to L-homoserine, forming acetyl-L-homoserine. This Streptococcus thermophilus (strain ATCC BAA-250 / LMG 18311) protein is Homoserine O-acetyltransferase.